Reading from the N-terminus, the 632-residue chain is Extracellular metalloproteinase 2 (632 aa).

A signal peptide spans 1 to 19; it reads MHGLLLAGLAAALPLGVAG. Residues 20-244 constitute a propeptide that is removed on maturation; sequence LPARQQSGLS…VHNVVDYVAS (225 aa). Asparagine 270 is a glycosylation site (N-linked (GlcNAc...) asparagine). Histidine 429 is a Zn(2+) binding site. Glutamate 430 is a catalytic residue. Histidine 433 contributes to the Zn(2+) binding site.

The protein belongs to the peptidase M36 family. Zn(2+) is required as a cofactor.

The protein localises to the secreted. Secreted metalloproteinase probably acting as a virulence factor. This is Extracellular metalloproteinase 2 (MEP2) from Trichophyton rubrum (Athlete's foot fungus).